The following is a 302-amino-acid chain: Syntaxin-17 (302 aa).

N-acetylserine is present on serine 2. Residues 2–228 lie on the Cytoplasmic side of the membrane; the sequence is SEDEEKVKLR…KNLGKAAKYK (227 aa). An N6-acetyllysine modification is found at lysine 41. A coiled-coil region spans residues 53 to 123; the sequence is EEHINAGRTV…EELKKQFNDE (71 aa). Tyrosine 157 carries the phosphotyrosine; by ABL1 modification. The t-SNARE coiled-coil homology domain occupies 162–224; that stretch reads IPRDQNAAES…EEGTKNLGKA (63 aa). The chain crosses the membrane as a helical span at residues 229 to 249; the sequence is LAALPVAGALIGGVVGGPIGL. The interval 229–275 is necessary and sufficient for localization to autophagosome; that stretch reads LAALPVAGALIGGVVGGPIGLLAGFKVAGIAAALGGGVLGFTGGKLI. At 250–254 the chain is on the lumenal side; the sequence is LAGFK. The helical transmembrane segment at 255 to 275 threads the bilayer; it reads VAGIAAALGGGVLGFTGGKLI. The Cytoplasmic segment spans residues 276 to 302; that stretch reads QRRKQKMMEKLASSCPDLPSQTDKKCS. Serine 289 carries the post-translational modification Phosphoserine. The Endoplasmic reticulum retention signal motif lies at 299 to 302; the sequence is KKCS.

Belongs to the syntaxin family. As to quaternary structure, forms a SNARE complex composed of VAMP8, SNAP29 and STX17 involved in fusion of autophagosome with lysosome. May interact with VTI1B. Probably interacts with BET1, SCFD1 and SEC22B. Interacts with PTPN2 and ABL1; involved in STX17 phosphorylation. Interacts with COPB1. Interacts with TMED9 and TMED10; the interaction is direct. Interacts with VAMP7. Interacts with RUBCNL/PACER; promoting targeting of RUBCNL/PACER to autophagosome. Interacts with VAMP8, SNAP29, VPS39 and VPS41; these interactions are increased in the absence of TMEM39A. Interacts with IRGM; promoting STX17 recruitment to autophagosomes. Interacts with ATG8 proteins GABARAP and MAP1LC3B. Interacts with RNF115; this interaction enhances STX17 stability which in turn promotes autophagosome maturation. Interacts with RAB39A (GTP-bound); the interaction promotes autophagosome-lysosome membrane fusion driven by STX17-SNAP29-VAMP8. Interacts with RAB39B; the interaction may promote a different fonction in autophagy as compared with RAB39A. Phosphorylated at Tyr-157 probably by ABL1. Dephosphorylation by PTPN2; regulates exit from the endoplasmic reticulum.

It localises to the endoplasmic reticulum membrane. The protein localises to the smooth endoplasmic reticulum membrane. Its subcellular location is the endoplasmic reticulum-Golgi intermediate compartment membrane. It is found in the cytoplasmic vesicle. The protein resides in the autophagosome membrane. It localises to the COPII-coated vesicle membrane. The protein localises to the cytoplasm. Its subcellular location is the cytosol. It is found in the mitochondrion membrane. The protein resides in the autolysosome membrane. SNAREs, soluble N-ethylmaleimide-sensitive factor-attachment protein receptors, are essential proteins for fusion of cellular membranes. SNAREs localized on opposing membranes assemble to form a trans-SNARE complex, an extended, parallel four alpha-helical bundle that drives membrane fusion. STX17 is a SNARE of the autophagosome involved in autophagy through the direct control of autophagosome membrane fusion with the lysosome membrane. May also play a role in the early secretory pathway where it may maintain the architecture of the endoplasmic reticulum-Golgi intermediate compartment/ERGIC and Golgi and/or regulate transport between the endoplasmic reticulum, the ERGIC and the Golgi. The sequence is that of Syntaxin-17 from Bos taurus (Bovine).